We begin with the raw amino-acid sequence, 144 residues long: Protein cornichon homolog 1 (144 aa).

At methionine 1–tyrosine 10 the chain is on the cytoplasmic side. The chain crosses the membrane as a helical span at residues methionine 11–phenylalanine 31. Residues aspartate 32–tyrosine 56 are Lumenal-facing. Residues leucine 57–leucine 77 form a helical membrane-spanning segment. Residues asparagine 78–lysine 122 are Cytoplasmic-facing. Residues leucine 123–serine 143 traverse the membrane as a helical segment. A topological domain (lumenal) is located at residue serine 144.

Belongs to the cornichon family. In terms of assembly, interacts with AREG immature precursor and with immature TGFA, i.e. with a prosegment and lacking full N-glycosylation, but not with the fully N-glycosylated form. In the Golgi apparatus, may form a complex with GORASP55 and transmembrane TGFA.

The protein resides in the endoplasmic reticulum membrane. The protein localises to the golgi apparatus membrane. In terms of biological role, involved in the selective transport and maturation of TGF-alpha family proteins. This chain is Protein cornichon homolog 1 (CNIH1), found in Bos taurus (Bovine).